The primary structure comprises 234 residues: 2-C-methyl-D-erythritol 4-phosphate cytidylyltransferase (234 aa).

The protein belongs to the IspD/TarI cytidylyltransferase family. IspD subfamily.

The enzyme catalyses 2-C-methyl-D-erythritol 4-phosphate + CTP + H(+) = 4-CDP-2-C-methyl-D-erythritol + diphosphate. The protein operates within isoprenoid biosynthesis; isopentenyl diphosphate biosynthesis via DXP pathway; isopentenyl diphosphate from 1-deoxy-D-xylulose 5-phosphate: step 2/6. Catalyzes the formation of 4-diphosphocytidyl-2-C-methyl-D-erythritol from CTP and 2-C-methyl-D-erythritol 4-phosphate (MEP). In Syntrophus aciditrophicus (strain SB), this protein is 2-C-methyl-D-erythritol 4-phosphate cytidylyltransferase.